The following is a 222-amino-acid chain: Methionine import system permease protein MetP (222 aa).

One can recognise an ABC transmembrane type-1 domain in the interval threonine 18–glycine 212. A run of 5 helical transmembrane segments spans residues threonine 25–leucine 45, phenylalanine 73–glycine 93, alanine 97–leucine 117, isoleucine 152–isoleucine 172, and phenylalanine 195–isoleucine 215.

Belongs to the binding-protein-dependent transport system permease family. CysTW subfamily. In terms of assembly, the complex is composed of two ATP-binding proteins (MetN), two transmembrane proteins (MetP) and a solute-binding protein (MetQ).

It localises to the cell membrane. In terms of biological role, part of the ABC transporter complex MetNPQ involved in methionine import. Responsible for the translocation of the substrate across the membrane. It has also been shown to be involved in methionine sulfoxide transport. The polypeptide is Methionine import system permease protein MetP (metP) (Bacillus subtilis (strain 168)).